The following is a 392-amino-acid chain: B2 bradykinin receptor (392 aa).

The Extracellular segment spans residues 1-61 (MPCSWKLLGF…EWWSWLNAIQ (61 aa)). Asparagine 29 and asparagine 40 each carry an N-linked (GlcNAc...) asparagine glycan. The helical transmembrane segment at 62–85 (APFLWVLFLLAALENLFVLSVFFL) threads the bilayer. Residues 86-94 (HKNSCTVAE) lie on the Cytoplasmic side of the membrane. A helical membrane pass occupies residues 95–119 (IYLGNLAAADLILACGLPFWAITIA). Topologically, residues 120–132 (NNFDWVFGEVLCR) are extracellular. The cysteines at positions 131 and 212 are disulfide-linked. Residues 133–154 (VVNTMIYMNLYSSICFLMLVSI) traverse the membrane as a helical segment. Residues 155–176 (DRYLALVKTMSMGRMRGVRWAK) are Cytoplasmic-facing. Tyrosine 157 bears the Phosphotyrosine mark. Residues 177 to 199 (LYSLVIWGCTLLLSSPMLVFRTM) traverse the membrane as a helical segment. At 200 to 222 (REYSEEGHNVTACVIVYPSRSWE) the chain is on the extracellular side. The N-linked (GlcNAc...) asparagine glycan is linked to asparagine 208. The helical transmembrane segment at 223–249 (VFTNVLLNLVGFLLPLSVITFCTVRIL) threads the bilayer. The Cytoplasmic segment spans residues 250 to 268 (QVLRNNEMKKFKEVQTERK). A helical transmembrane segment spans residues 269 to 293 (ATVLVLAVLGLFVLCWVPFQISTFL). Residues 294-312 (DTLLRLGVLSGCWDEHAVD) are Extracellular-facing. The helical transmembrane segment at 313 to 336 (VITQISSYVAYSNSGLNPLVYVIV) threads the bilayer. Over 337 to 392 (GKRFRKKSREVYRVLCQKGGCMGEPVQMENSMGTLRTSISVERQIHKLQDWAGKKQ) the chain is Cytoplasmic. Phosphotyrosine is present on tyrosine 348. A lipid anchor (S-palmitoyl cysteine) is attached at cysteine 352. Phosphoserine is present on serine 367. A Phosphothreonine modification is found at threonine 370. Phosphoserine; by GRK6 is present on residues serine 374 and serine 376.

This sequence belongs to the G-protein coupled receptor 1 family. Bradykinin receptor subfamily. BDKRB2 sub-subfamily. Forms a complex with PECAM1 and GNAQ. Interacts with PECAM1.

The protein resides in the cell membrane. In terms of biological role, receptor for bradykinin. It is associated with G proteins that activate a phosphatidylinositol-calcium second messenger system. In Mus musculus (Mouse), this protein is B2 bradykinin receptor (Bdkrb2).